A 365-amino-acid chain; its full sequence is Alanine racemase (365 aa).

Lys32 serves as the catalytic Proton acceptor; specific for D-alanine. Lys32 carries the post-translational modification N6-(pyridoxal phosphate)lysine. Residue Arg128 participates in substrate binding. Residue Tyr257 is the Proton acceptor; specific for L-alanine of the active site. Met305 contacts substrate.

This sequence belongs to the alanine racemase family. The cofactor is pyridoxal 5'-phosphate.

It carries out the reaction L-alanine = D-alanine. It functions in the pathway amino-acid biosynthesis; D-alanine biosynthesis; D-alanine from L-alanine: step 1/1. Functionally, catalyzes the interconversion of L-alanine and D-alanine. May also act on other amino acids. This is Alanine racemase (alr) from Francisella tularensis subsp. tularensis (strain WY96-3418).